The chain runs to 561 residues: Long-chain-fatty-acid--CoA ligase (561 aa).

213–224 (YTGGTTGVAKGA) is an ATP binding site.

This sequence belongs to the ATP-dependent AMP-binding enzyme family. Mg(2+) is required as a cofactor.

It is found in the membrane. The enzyme catalyses a long-chain fatty acid + ATP + CoA = a long-chain fatty acyl-CoA + AMP + diphosphate. The protein operates within lipid metabolism; fatty acid beta-oxidation. Its function is as follows. Catalyzes the esterification, concomitant with transport, of exogenous long-chain fatty acids into metabolically active CoA thioesters for subsequent degradation or incorporation into phospholipids. The chain is Long-chain-fatty-acid--CoA ligase (fadD) from Escherichia coli O6:H1 (strain CFT073 / ATCC 700928 / UPEC).